Here is a 362-residue protein sequence, read N- to C-terminus: E3 ubiquitin-protein ligase TM129 (362 aa).

Topologically, residues 1 to 6 (MESPEV) are lumenal. Residues 7–27 (TFTLAYVVFSVCFVFTPNEFH) traverse the membrane as a helical segment. Residues 28–56 (SAGITVQNLLSGWLGSEDVAFVHYHIRRS) are Cytoplasmic-facing. Residues 57-77 (TATLLTHSLLPMGYFIGMCFA) form a helical membrane-spanning segment. Over 78–94 (APEKELYNVYKAADGWK) the chain is Lumenal. The helical transmembrane segment at 95–115 (VFVLITVLLPVTTSILAFYWS) threads the bilayer. Residues 116-362 (QKRWGNHPLA…FCIVDVCIVR (247 aa)) are Cytoplasmic-facing. An RING-type; degenerate zinc finger spans residues 285–350 (CIGCMQTNAN…SSHVPCPTCR (66 aa)).

This sequence belongs to the TMEM129 family. Integral component of ER-resident dislocation complexes.

The protein localises to the endoplasmic reticulum membrane. It carries out the reaction S-ubiquitinyl-[E2 ubiquitin-conjugating enzyme]-L-cysteine + [acceptor protein]-L-lysine = [E2 ubiquitin-conjugating enzyme]-L-cysteine + N(6)-ubiquitinyl-[acceptor protein]-L-lysine.. Its pathway is protein modification; protein ubiquitination. Its function is as follows. E3 ubiquitin-protein ligase involved in ER-associated protein degradation, preferentially associates with the E2 enzyme UBE2J2. The polypeptide is E3 ubiquitin-protein ligase TM129 (tmem129) (Xenopus tropicalis (Western clawed frog)).